The sequence spans 113 residues: uncharacterized protein (113 aa).

Its subcellular location is the mitochondrion. This is an uncharacterized protein from Arabidopsis thaliana (Mouse-ear cress).